Reading from the N-terminus, the 446-residue chain is MISAFEANCDGLVGPTHSYVGLSPGNLASTRNAGEVSNPRGAALEGLAKMRRLADLGLPQFVLPPHERPAVSLLRQLGFSGPDEIVLTSAWRDAPALAAAACSASPMWAANAATVTPSADAADGRVHFTPANLLTNLHRSLEGRQTARSLRRLFADETRFAVHDPLPAQPHFADEGAANHVRLCAEHGGPGVNLFVWGREAWSHWDGRFPARQTKEAFEAIQRRHGAARAVFPQQGKAAIEGGAFHNDVVCVGTRECLFFHERAFEDRATMAREVRAAASGLFEPAFVEVTEADLPMADLVASYLFNSQLLVVPGEDRLVLLAPVETRDNPRAYAVAESLATSNGPIGRVEYVDVRQSMRNGGGPACLRLRVVLTEAELAAANPAQRFTADLQDALADWITRRYRDRLSPADLADAKLLTESREALDELTQILGLGDDFYPFQRTA.

Substrate is bound by residues 20 to 29, asparagine 111, and 138 to 139; these read VGLSPGNLAS and HR. Residue glutamate 175 is part of the active site. Position 212 (arginine 212) interacts with substrate. Histidine 246 is a catalytic residue. Aspartate 248 and asparagine 361 together coordinate substrate. Cysteine 367 serves as the catalytic Nucleophile.

This sequence belongs to the succinylarginine dihydrolase family. As to quaternary structure, homodimer.

The catalysed reaction is N(2)-succinyl-L-arginine + 2 H2O + 2 H(+) = N(2)-succinyl-L-ornithine + 2 NH4(+) + CO2. It participates in amino-acid degradation; L-arginine degradation via AST pathway; L-glutamate and succinate from L-arginine: step 2/5. Catalyzes the hydrolysis of N(2)-succinylarginine into N(2)-succinylornithine, ammonia and CO(2). The polypeptide is N-succinylarginine dihydrolase 2 (Caulobacter vibrioides (strain ATCC 19089 / CIP 103742 / CB 15) (Caulobacter crescentus)).